The sequence spans 960 residues: Dynamin-like GTPase OPA1, mitochondrial (960 aa).

Residues 1–87 (MWRLRRAAVA…IKYGYQPRRN (87 aa)) constitute a mitochondrion transit peptide. Residues 88-96 (FWPARLATR) are Mitochondrial matrix-facing. Residues 97–113 (LLKLRYLILGSAVGGGY) traverse the membrane as a helical segment. Topologically, residues 114-770 (TAKKTFDQWK…NAIENMVGPD (657 aa)) are mitochondrial intermembrane. 2 short sequence motifs (LQQQIQ motif) span residues 181 to 186 (DFFTSG) and 217 to 222 (QLQEEL). A coiled-coil region spans residues 210–254 (SDKEKIDQLQEELLHTQLKYQRILERLEKENKELRKLVLQKDDKG). K228 is modified (N6-acetyllysine). The LQQQIQ motif signature appears at 235 to 240 (RLEKEN). One can recognise a Dynamin-type G domain in the interval 285–561 (QDHLPRVVVV…FWKMVRESVE (277 aa)). The interval 295–302 (GDQSAGKT) is G1 motif. S298, G300, K301, T302, S303, and G317 together coordinate GTP. T302 is a binding site for Mg(2+). The tract at residues 321 to 324 (MMTR) is G2 motif. Residues T323 and D398 each contribute to the Mg(2+) site. The G3 motif stretch occupies residues 398–401 (DLPG). The tract at residues 467 to 470 (TKVD) is G4 motif. 5 residues coordinate GTP: K468, D470, T503, G506, and N507. The G5 motif stretch occupies residues 501–504 (VVTG). 2 stalk region regions span residues 589–836 (DRNE…IKDT) and 874–928 (CNDV…IKLL). The segment at 736–856 (SDKQQWDAAI…KTALNHCNLC (121 aa)) is paddle region. The stretch at 771-781 (WKKRWLYWKNR) is an intramembrane region. The Mitochondrial intermembrane portion of the chain corresponds to 782 to 960 (TQEQCVHNET…AFIEALHQEK (179 aa)). A disulfide bridge links C856 with C874. Residues 895–960 (RQQLTNTEVR…AFIEALHQEK (66 aa)) are a coiled coil.

Belongs to the TRAFAC class dynamin-like GTPase superfamily. Dynamin/Fzo/YdjA family. In terms of assembly, oligomeric complex consisting of membrane-bound and soluble forms of OPA1. Interacts with RCC1L; RCC1L acts as a guanine nucleotide exchange factor (GEF) for OPA1 by exchanging bound GDP for free GTP. Interacts with CHCHD3 and IMMT; these interactions occur preferentially with soluble OPA1 forms. Interacts with PRELID1. In terms of processing, cleaved by OMA1 or YME1L downstream of the transmembrane region in response to different signals to generate soluble forms. Cleaved by OMA1 at position S1 following stress conditions, generating the short soluble form (Dynamin-like GTPase OPA1, short form; S-OPA1). AFG3L2 is involved in the regulation of OMA1-dependent processing of OPA1. PARL-dependent proteolytic processing releases an antiapoptotic soluble form not required for mitochondrial fusion. Cleavage at position S2 by YME1L is required to mediate oxidative phosphorylation (OXPHOS)-induced mitochondrial fusion. Cleavage occurs in the sequence motif Leu-Gln-Gln-Gln-Ile-Gln (LQQQIQ). Post-translationally, cleavage at position S2 by YME1L is required to mediate oxidative phosphorylation (OXPHOS)-induced mitochondrial fusion. Cleavage occurs in the sequence motif Leu-Gln-Gln-Gln-Ile-Gln (LQQQIQ). Cleavage at position S3 by YME1L is required for membrane tubulation. In terms of processing, cleavage at position S3 by YME1L is required for membrane tubulation. As to expression, highly expressed in retina. Also expressed in brain, testis, heart and skeletal muscle. Low levels of all isoforms expressed in a variety of tissues. Expressed in retina, skeletal muscle, heart, lung, ovary, colon, thyroid gland, leukocytes and fetal brain. Low levels of all isoforms expressed in a variety of tissues. In terms of tissue distribution, isoform 2 expressed in colon, liver, kidney, thyroid gland and leukocytes.

The protein localises to the mitochondrion inner membrane. It localises to the mitochondrion intermembrane space. It carries out the reaction GTP + H2O = GDP + phosphate + H(+). With respect to regulation, activated by guanine nucleotide exchange factor RCC1L. Its function is as follows. Dynamin-related GTPase that is essential for normal mitochondrial morphology by mediating fusion of the mitochondrial inner membranes, regulating cristae morphology and maintaining respiratory chain function. Exists in two forms: the transmembrane, long form (Dynamin-like GTPase OPA1, long form; L-OPA1), which is tethered to the inner mitochondrial membrane, and the short soluble form (Dynamin-like GTPase OPA1, short form; S-OPA1), which results from proteolytic cleavage and localizes in the intermembrane space. Both forms (L-OPA1 and S-OPA1) cooperate to catalyze the fusion of the mitochondrial inner membrane. The equilibrium between L-OPA1 and S-OPA1 is essential: excess levels of S-OPA1, produced by cleavage by OMA1 following loss of mitochondrial membrane potential, lead to an impaired equilibrium between L-OPA1 and S-OPA1, inhibiting mitochondrial fusion. The balance between L-OPA1 and S-OPA1 also influences cristae shape and morphology. Involved in remodeling cristae and the release of cytochrome c during apoptosis. Proteolytic processing by PARL in response to intrinsic apoptotic signals may lead to disassembly of OPA1 oligomers and release of the caspase activator cytochrome C (CYCS) into the mitochondrial intermembrane space. Acts as a regulator of T-helper Th17 cells, which are characterized by cells with fused mitochondria with tight cristae, by mediating mitochondrial membrane remodeling: OPA1 is required for interleukin-17 (IL-17) production. Its role in mitochondrial morphology is required for mitochondrial genome maintenance. In terms of biological role, constitutes the transmembrane long form (L-OPA1) that plays a central role in mitochondrial inner membrane fusion and cristae morphology. L-OPA1 and the soluble short form (S-OPA1) form higher-order helical assemblies that coordinate the fusion of mitochondrial inner membranes. Inner membrane-anchored L-OPA1 molecules initiate membrane remodeling by recruiting soluble S-OPA1 to rapidly polymerize into a flexible cylindrical scaffold encaging the mitochondrial inner membrane. Once at the membrane surface, the formation of S-OPA1 helices induce bilayer curvature. OPA1 dimerization through the paddle region, which inserts into cardiolipin-containing membrane, promotes GTP hydrolysis and the helical assembly of a flexible OPA1 lattice on the membrane, which drives membrane curvature and mitochondrial fusion. Plays a role in the maintenance and remodeling of mitochondrial cristae, some invaginations of the mitochondrial inner membrane that provide an increase in the surface area. Probably acts by forming helical filaments at the inside of inner membrane tubes with the shape and dimensions of crista junctions. The equilibrium between L-OPA1 and S-OPA1 influences cristae shape and morphology: increased L-OPA1 levels promote cristae stacking and elongated mitochondria, while increased S-OPA1 levels correlated with irregular cristae packing and round mitochondria shape. Constitutes the soluble short form (S-OPA1) generated by cleavage by OMA1, which plays a central role in mitochondrial inner membrane fusion and cristae morphology. The transmembrane long form (L-OPA1) and the S-OPA1 form higher-order helical assemblies that coordinate the fusion of mitochondrial inner membranes. Inner membrane-anchored L-OPA1 molecules initiate membrane remodeling by recruiting soluble S-OPA1 to rapidly polymerize into a flexible cylindrical scaffold encaging the mitochondrial inner membrane. Once at the membrane surface, the formation of S-OPA1 helices induce bilayer curvature. OPA1 dimerization through the paddle region, which inserts into cardiolipin-containing membrane, promotes GTP hydrolysis and the helical assembly of a flexible OPA1 lattice on the membrane, which drives membrane curvature and mitochondrial fusion. Excess levels of S-OPA1 produced by cleavage by OMA1 following stress conditions that induce loss of mitochondrial membrane potential, lead to an impaired equilibrium between L-OPA1 and S-OPA1, thereby inhibiting mitochondrial fusion. Involved in mitochondrial safeguard in response to transient mitochondrial membrane depolarization by mediating flickering: cleavage by OMA1 leads to excess production of S-OPA1, preventing mitochondrial hyperfusion. Plays a role in the maintenance and remodeling of mitochondrial cristae, some invaginations of the mitochondrial inner membrane that provide an increase in the surface area. Probably acts by forming helical filaments at the inside of inner membrane tubes with the shape and dimensions of crista junctions. The equilibrium between L-OPA1 and S-OPA1 influences cristae shape and morphology: increased L-OPA1 levels promote cristae stacking and elongated mitochondria, while increased S-OPA1 levels correlated with irregular cristae packing and round mitochondria shape. Functionally, coexpression of isoform 1 with shorter alternative products is required for optimal activity in promoting mitochondrial fusion. Its function is as follows. Isoforms that contain the alternative exon 4b are required for mitochondrial genome maintenance, possibly by anchoring the mitochondrial nucleoids to the inner mitochondrial membrane. This chain is Dynamin-like GTPase OPA1, mitochondrial, found in Homo sapiens (Human).